The following is a 306-amino-acid chain: Epoxyqueuosine reductase (306 aa).

Aspartate 131 (proton donor) is an active-site residue. The 4Fe-4S ferredoxin-type domain occupies 173 to 205 (LDLTYDHPVTDHCGTCTACIDACPTQAIVQPYV). The [4Fe-4S] cluster site is built by cysteine 185, cysteine 188, cysteine 191, cysteine 195, cysteine 211, cysteine 238, cysteine 241, and cysteine 245.

The protein belongs to the QueG family. In terms of assembly, monomer. Cob(II)alamin serves as cofactor. [4Fe-4S] cluster is required as a cofactor.

It localises to the cytoplasm. It catalyses the reaction epoxyqueuosine(34) in tRNA + AH2 = queuosine(34) in tRNA + A + H2O. The protein operates within tRNA modification; tRNA-queuosine biosynthesis. In terms of biological role, catalyzes the conversion of epoxyqueuosine (oQ) to queuosine (Q), which is a hypermodified base found in the wobble positions of tRNA(Asp), tRNA(Asn), tRNA(His) and tRNA(Tyr). The chain is Epoxyqueuosine reductase from Cellulophaga algicola (strain DSM 14237 / IC166 / ACAM 630).